The following is a 779-amino-acid chain: Phosphoribosylformylglycinamidine synthase subunit PurL (779 aa).

H52 is an active-site residue. Y55 and K94 together coordinate ATP. E96 contributes to the Mg(2+) binding site. Residues 97-100 (SHNH) and R119 contribute to the substrate site. The Proton acceptor role is filled by H98. D120 serves as a coordination point for Mg(2+). Residue Q243 participates in substrate binding. D271 lines the Mg(2+) pocket. Position 315 to 317 (315 to 317 (ESQ)) interacts with substrate. ATP contacts are provided by N523 and G560. Residue N561 coordinates Mg(2+). S563 provides a ligand contact to substrate.

This sequence belongs to the FGAMS family. As to quaternary structure, monomer. Part of the FGAM synthase complex composed of 1 PurL, 1 PurQ and 2 PurS subunits.

It is found in the cytoplasm. The enzyme catalyses N(2)-formyl-N(1)-(5-phospho-beta-D-ribosyl)glycinamide + L-glutamine + ATP + H2O = 2-formamido-N(1)-(5-O-phospho-beta-D-ribosyl)acetamidine + L-glutamate + ADP + phosphate + H(+). It functions in the pathway purine metabolism; IMP biosynthesis via de novo pathway; 5-amino-1-(5-phospho-D-ribosyl)imidazole from N(2)-formyl-N(1)-(5-phospho-D-ribosyl)glycinamide: step 1/2. Its function is as follows. Part of the phosphoribosylformylglycinamidine synthase complex involved in the purines biosynthetic pathway. Catalyzes the ATP-dependent conversion of formylglycinamide ribonucleotide (FGAR) and glutamine to yield formylglycinamidine ribonucleotide (FGAM) and glutamate. The FGAM synthase complex is composed of three subunits. PurQ produces an ammonia molecule by converting glutamine to glutamate. PurL transfers the ammonia molecule to FGAR to form FGAM in an ATP-dependent manner. PurS interacts with PurQ and PurL and is thought to assist in the transfer of the ammonia molecule from PurQ to PurL. This Prochlorococcus marinus (strain MIT 9215) protein is Phosphoribosylformylglycinamidine synthase subunit PurL.